Reading from the N-terminus, the 332-residue chain is Glycerol-3-phosphate dehydrogenase [NAD(P)+] (332 aa).

The NADPH site is built by tryptophan 11, arginine 30, and lysine 108. 3 residues coordinate sn-glycerol 3-phosphate: lysine 108, glycine 137, and serine 139. An NADPH-binding site is contributed by alanine 141. Sn-glycerol 3-phosphate contacts are provided by lysine 192, aspartate 245, serine 255, arginine 256, and asparagine 257. Lysine 192 acts as the Proton acceptor in catalysis. Arginine 256 lines the NADPH pocket. Valine 280 and glutamate 282 together coordinate NADPH.

This sequence belongs to the NAD-dependent glycerol-3-phosphate dehydrogenase family.

It is found in the cytoplasm. The enzyme catalyses sn-glycerol 3-phosphate + NAD(+) = dihydroxyacetone phosphate + NADH + H(+). The catalysed reaction is sn-glycerol 3-phosphate + NADP(+) = dihydroxyacetone phosphate + NADPH + H(+). It functions in the pathway membrane lipid metabolism; glycerophospholipid metabolism. Its function is as follows. Catalyzes the reduction of the glycolytic intermediate dihydroxyacetone phosphate (DHAP) to sn-glycerol 3-phosphate (G3P), the key precursor for phospholipid synthesis. The sequence is that of Glycerol-3-phosphate dehydrogenase [NAD(P)+] from Burkholderia mallei (strain ATCC 23344).